Consider the following 75-residue polypeptide: Ribonuclease pancreatic (75 aa).

Intrachain disulfides connect C7–C65 and C46–C53. A glycan (N-linked (GlcNAc...) asparagine) is linked at N15. Substrate contacts are provided by residues 22–26 (KPVNT), K47, and R66.

This sequence belongs to the pancreatic ribonuclease family. Monomer. Interacts with and forms tight 1:1 complexes with RNH1. Dimerization of two such complexes may occur. Interaction with RNH1 inhibits this protein. In terms of tissue distribution, pancreas.

Its subcellular location is the secreted. The enzyme catalyses an [RNA] containing cytidine + H2O = an [RNA]-3'-cytidine-3'-phosphate + a 5'-hydroxy-ribonucleotide-3'-[RNA].. It catalyses the reaction an [RNA] containing uridine + H2O = an [RNA]-3'-uridine-3'-phosphate + a 5'-hydroxy-ribonucleotide-3'-[RNA].. Its function is as follows. Endonuclease that catalyzes the cleavage of RNA on the 3' side of pyrimidine nucleotides. Acts on single-stranded and double-stranded RNA. This Oryx leucoryx (Arabian oryx) protein is Ribonuclease pancreatic (rnase1).